Consider the following 251-residue polypeptide: MQTLEEHCWSCSCTRGRDKKGTKVSAWLARRVGKAMSSLNSLLSLAYSTLASSEGRSLIQRSLVLFTVGVFLALVLNLLQIQRNVTLFPEEVIATIFSSAWWVPPCCGTAAAVVGLLYPCIDSRIGEPHKFKREWASVMRCIAVFVGINHASAKLDFANNVQLSLTLAALSLGLWWTFDRSRSGLGLGITIAFLATLITQFLVYNGVYQYTSPDFLYIRSWLPCIFFSGGVTVGNIGRQLAMGSSEKTHGD.

The Cytoplasmic portion of the chain corresponds to 1-58 (MQTLEEHCWSCSCTRGRDKKGTKVSAWLARRVGKAMSSLNSLLSLAYSTLASSEGRSL). Residues 59 to 81 (IQRSLVLFTVGVFLALVLNLLQI) traverse the membrane as a helical segment. Over 82–100 (QRNVTLFPEEVIATIFSSA) the chain is Extracellular. The chain crosses the membrane as a helical span at residues 101-118 (WWVPPCCGTAAAVVGLLY). The Cytoplasmic portion of the chain corresponds to 119 to 133 (PCIDSRIGEPHKFKR). A helical membrane pass occupies residues 134 to 156 (EWASVMRCIAVFVGINHASAKLD). Residues 157-159 (FAN) are Extracellular-facing. A helical membrane pass occupies residues 160 to 178 (NVQLSLTLAALSLGLWWTF). Residues 179 to 183 (DRSRS) are Cytoplasmic-facing. Residues 184 to 205 (GLGLGITIAFLATLITQFLVYN) form a helical membrane-spanning segment. Topologically, residues 206 to 219 (GVYQYTSPDFLYIR) are extracellular. A helical transmembrane segment spans residues 220–237 (SWLPCIFFSGGVTVGNIG). Over 238–251 (RQLAMGSSEKTHGD) the chain is Cytoplasmic. A KxHxx motif is present at residues 245 to 251 (SEKTHGD).

This sequence belongs to the INSIG family. Interacts with scap; interaction is direct and only takes place in the presence of sterols; it prevents interaction between scap and the coat protein complex II (COPII). Associates with the SCAP-SREBP complex; association is mediated via its interaction with scap and only takes place in the presence of sterols.

The protein localises to the endoplasmic reticulum membrane. In terms of biological role, oxysterol-binding protein that mediates feedback control of cholesterol synthesis by controlling both endoplasmic reticulum to Golgi transport of scap and degradation of hmgcr. Acts as a negative regulator of cholesterol biosynthesis by mediating the retention of the SCAP-SREBP complex in the endoplasmic reticulum, thereby blocking the processing of sterol regulatory element-binding proteins (SREBPs). Binds oxysterol, including 25-hydroxycholesterol, regulating interaction with scap and retention of the SCAP-SREBP complex in the endoplasmic reticulum. In presence of oxysterol, interacts with scap, retaining the SCAP-SREBP complex in the endoplasmic reticulum, thereby preventing scap from escorting SREBPs to the Golgi. Sterol deprivation reduces oxysterol-binding, disrupting the interaction between insig1 and scap, thereby promoting Golgi transport of the SCAP-SREBP complex, followed by processing and nuclear translocation of SREBPs. Also regulates cholesterol synthesis by regulating degradation of hmgcr. This chain is Insulin-induced gene 1 protein, found in Xenopus laevis (African clawed frog).